The following is a 281-amino-acid chain: Pantothenate synthetase (281 aa).

30 to 37 (MGYYHAGH) is a binding site for ATP. Histidine 37 (proton donor) is an active-site residue. (R)-pantoate is bound at residue glutamine 61. Glutamine 61 is a binding site for beta-alanine. 147–150 (GEKD) serves as a coordination point for ATP. A (R)-pantoate-binding site is contributed by glutamine 153. Residues valine 176 and 184-187 (MSSR) each bind ATP.

This sequence belongs to the pantothenate synthetase family. In terms of assembly, homodimer.

It is found in the cytoplasm. The enzyme catalyses (R)-pantoate + beta-alanine + ATP = (R)-pantothenate + AMP + diphosphate + H(+). The protein operates within cofactor biosynthesis; (R)-pantothenate biosynthesis; (R)-pantothenate from (R)-pantoate and beta-alanine: step 1/1. Its function is as follows. Catalyzes the condensation of pantoate with beta-alanine in an ATP-dependent reaction via a pantoyl-adenylate intermediate. In Oleidesulfovibrio alaskensis (strain ATCC BAA-1058 / DSM 17464 / G20) (Desulfovibrio alaskensis), this protein is Pantothenate synthetase.